We begin with the raw amino-acid sequence, 74 residues long: MNDIKIRFGNKLKKLRKEKTDLSQESFAAQIDLDRTYYSSIENGKRNVSLVNLEKISAGLGITLSELFSDIEKE.

Positions 12 to 67 (LKKLRKEKTDLSQESFAAQIDLDRTYYSSIENGKRNVSLVNLEKISAGLGITLSEL) constitute an HTH cro/C1-type domain. The H-T-H motif DNA-binding region spans 23 to 42 (SQESFAAQIDLDRTYYSSIE).

Probably controls expression of its associated restriction-modification system MunI. The chain is Control protein C.MunI from Mycoplasma sp.